A 552-amino-acid chain; its full sequence is Cilia- and flagella- associated protein 210 (552 aa).

Coiled-coil stretches lie at residues 53–143 (DEWK…NAKQ), 186–307 (EEQL…KKRL), 348–409 (IARD…VMKA), and 460–488 (TEALVAEKEKEFQDYAREVIELESETTNK). The interval 216–238 (KDHLKQIKEHEEEEERRKKYEEK) is disordered.

As to quaternary structure, microtubule inner protein component of sperm flagellar doublet microtubules. As to expression, expressed in airway epithelial cells.

The protein resides in the cytoplasm. It localises to the cytoskeleton. It is found in the cilium axoneme. Its subcellular location is the flagellum axoneme. Microtubule inner protein (MIP) part of the dynein-decorated doublet microtubules (DMTs) in cilia axoneme, which is required for motile cilia beating. The polypeptide is Cilia- and flagella- associated protein 210 (Homo sapiens (Human)).